The chain runs to 226 residues: Holliday junction branch migration complex subunit RuvA (226 aa).

The domain I stretch occupies residues 1–67; sequence MITSVYAKIE…AINKELYAFK (67 aa). Positions 68 to 145 are domain II; the sequence is SLKEKEWFKA…YLKNQIVVSD (78 aa). Positions 146–167 are flexible linker; it reads KVEPQIDDDEKIDDSKDLNDDE. The segment at 168–226 is domain III; sequence LLSEIVIEAIDCLISLGYKQEQIKTALAEIDLKNESINDSADLVAVIIKQIGLRTSEVS.

This sequence belongs to the RuvA family. Homotetramer. Forms an RuvA(8)-RuvB(12)-Holliday junction (HJ) complex. HJ DNA is sandwiched between 2 RuvA tetramers; dsDNA enters through RuvA and exits via RuvB. An RuvB hexamer assembles on each DNA strand where it exits the tetramer. Each RuvB hexamer is contacted by two RuvA subunits (via domain III) on 2 adjacent RuvB subunits; this complex drives branch migration. In the full resolvosome a probable DNA-RuvA(4)-RuvB(12)-RuvC(2) complex forms which resolves the HJ.

Its subcellular location is the cytoplasm. Functionally, the RuvA-RuvB-RuvC complex processes Holliday junction (HJ) DNA during genetic recombination and DNA repair, while the RuvA-RuvB complex plays an important role in the rescue of blocked DNA replication forks via replication fork reversal (RFR). RuvA specifically binds to HJ cruciform DNA, conferring on it an open structure. The RuvB hexamer acts as an ATP-dependent pump, pulling dsDNA into and through the RuvAB complex. HJ branch migration allows RuvC to scan DNA until it finds its consensus sequence, where it cleaves and resolves the cruciform DNA. This is Holliday junction branch migration complex subunit RuvA from Mycoplasmoides gallisepticum (strain R(low / passage 15 / clone 2)) (Mycoplasma gallisepticum).